The chain runs to 124 residues: MARGSVILLAWLLLVATLSATLGLGMPTKEKRGWTLNSAGYLLGPHAIDNHRSFSDKHGLTGKRELPLEVEEGRLGSVAVPLPESNIVRTIMEFLSFLHLKEAGALDSLPGIPLATSSEDLEQS.

A signal peptide spans 1 to 19; it reads MARGSVILLAWLLLVATLS. Positions 20–30 are excised as a propeptide; sequence ATLGLGMPTKE. Residue threonine 61 is modified to Threonine amide. Residues serine 117 and serine 118 each carry the phosphoserine modification.

The protein belongs to the galanin family.

The protein resides in the secreted. Functionally, endocrine hormone of the central and peripheral nervous systems that binds and activates the G protein-coupled receptors GALR1, GALR2, and GALR3. This small neuropeptide may regulate diverse physiologic functions including contraction of smooth muscle of the gastrointestinal and genitourinary tract, growth hormone and insulin release and adrenal secretion. The sequence is that of Galanin peptides (Gal) from Rattus norvegicus (Rat).